Consider the following 381-residue polypeptide: L-lactate dehydrogenase (381 aa).

Residues 1-380 (MIISSASDYR…KPEALVDLSK (380 aa)) enclose the FMN hydroxy acid dehydrogenase domain. Tyr-24 contacts substrate. FMN-binding residues include Ser-106 and Gln-127. Tyr-129 provides a ligand contact to substrate. Thr-155 provides a ligand contact to FMN. Arg-164 contacts substrate. Lys-251 provides a ligand contact to FMN. Catalysis depends on His-275, which acts as the Proton acceptor. Arg-278 is a binding site for substrate. 306 to 330 (DSGIRNGLDIVRMLALGADATMLGR) is a binding site for FMN.

It belongs to the FMN-dependent alpha-hydroxy acid dehydrogenase family. The cofactor is FMN.

It is found in the cell inner membrane. The enzyme catalyses (S)-lactate + A = pyruvate + AH2. In terms of biological role, catalyzes the conversion of L-lactate to pyruvate. Is coupled to the respiratory chain. This chain is L-lactate dehydrogenase, found in Haemophilus influenzae (strain 86-028NP).